The sequence spans 305 residues: ATP synthase gamma chain (305 aa).

This sequence belongs to the ATPase gamma chain family. F-type ATPases have 2 components, CF(1) - the catalytic core - and CF(0) - the membrane proton channel. CF(1) has five subunits: alpha(3), beta(3), gamma(1), delta(1), epsilon(1). CF(0) has three main subunits: a, b and c.

The protein localises to the cell membrane. Functionally, produces ATP from ADP in the presence of a proton gradient across the membrane. The gamma chain is believed to be important in regulating ATPase activity and the flow of protons through the CF(0) complex. This Streptomyces griseus subsp. griseus (strain JCM 4626 / CBS 651.72 / NBRC 13350 / KCC S-0626 / ISP 5235) protein is ATP synthase gamma chain.